The primary structure comprises 146 residues: Cystatin-C (146 aa).

An N-terminal signal peptide occupies residues 1 to 26; sequence MAGPLRAPLLLLAILAVALAVSPAAG. Phosphoserine; by FAM20C is present on serine 43. A Secondary area of contact motif is present at residues 81-85; the sequence is QIVAG. 2 cysteine pairs are disulfide-bonded: cysteine 99-cysteine 109 and cysteine 123-cysteine 143.

The protein belongs to the cystatin family. As to quaternary structure, homodimer. Post-translationally, the Thr-25 variant is O-glycosylated with a core 1 or possibly core 8 glycan. The signal peptide of the O-glycosylated Thr-25 variant is cleaved between Ala-20 and Val-21. Expressed in submandibular and sublingual saliva but not in parotid saliva (at protein level). Expressed in various body fluids, such as the cerebrospinal fluid and plasma. Expressed in highest levels in the epididymis, vas deferens, brain, thymus, and ovary and the lowest in the submandibular gland.

The protein localises to the secreted. In terms of biological role, as an inhibitor of cysteine proteinases, this protein is thought to serve an important physiological role as a local regulator of this enzyme activity. The sequence is that of Cystatin-C (CST3) from Homo sapiens (Human).